Here is a 945-residue protein sequence, read N- to C-terminus: MSLANFFNEIAFKWQKEWENSKVYEANPETDKPKKFITVAFPYTNSPLHIGHGRTYITADIYARYLRMKGYNVLFPFAFQFTGTPILSISESVKRGDEEIISTFVNIYQIPKEEIEKFSDPTYLAEYFKNNMKNTAKKLGLGIDWRREFTTVDPIFEKFVQWQYRKLMELGYIKREDSPVAYCPRDEFPVGMHDTKGDVEPEITDLDGIYFPSGDYFFIAATPRPETIFGAVALLVNPEADYVIATDSLNRKVIISRQAYDKLKYQISFREEGEKKGKDLVGMIAKNPVTEKEIKVLPSKFVDPSIGTGVVMAVPSHEPLHYIALTELKEEFELIPVIKTDELGELPGVEAVGLAQTRNPAELKDYIDTIYRIEYHKGIMREDLVDLVPNFMKEFVKDKIAGKLVKDAREKTRELLDMLNSRITIYEISNGPVYCRCGAEIVVKVIKGQWFIDYSNPIWKTSVLKSLDKINFIPTDSKKEMEKIIFNLQPRAFTRSRGLGVRLPWDEKEIIDSLSDSTIYTAFYTIVHKLKYPISLLSDKFWDYILLDRGTADEISKELGIPKEQLEEIKSEFKYWYPVDSRHSGRDLIQNHLPYYLFHHFAIFGEKFLPRQIVTNGFIRVGGKKMSKSFGNIYPLNRAIDEYGVETVRIALTSTSSISDDIEFNSNIAKSIAEQLKKIHDLISKLLEIEGVNERRDPDVWLLSIFRRYIEDVDKAYENLDLRTVYMTVYYTIYETIKDYIELTNAKINKDIIKKVISIWLRLMAPITPHLAEELWHKMSNTFVVKEKFPSINEVEYNEKSLLKVEYLRSIIEDVNRLSSELGKEAEKVVIYVNDDNNLRELLKKAIIAIKDRKSLRDFMIENNVDDKTARRIYELANVLPSTIRDLIVTTDIDEEEVIVQNINFLMNKLDLREMIVYSSTDEKAPNILGKKDLALPYKPGIAIL.

The short motif at 42–52 is the 'HIGH' region element; that stretch reads PYTNSPLHIGH. Positions 625–629 match the 'KMSKS' region motif; sequence KMSKS. Lysine 628 serves as a coordination point for ATP.

Belongs to the class-I aminoacyl-tRNA synthetase family.

It localises to the cytoplasm. The enzyme catalyses tRNA(Leu) + L-leucine + ATP = L-leucyl-tRNA(Leu) + AMP + diphosphate. This is Leucine--tRNA ligase 1 from Sulfurisphaera tokodaii (strain DSM 16993 / JCM 10545 / NBRC 100140 / 7) (Sulfolobus tokodaii).